We begin with the raw amino-acid sequence, 447 residues long: MSGSRRKATPASRTRVGNYEMGRTLGEGSFAKVKYAKNTVTGDQAAIKILDREKVFRHKMVEQLKREISTMKLIKHPNVVEIIEVMASKTKIYIVLELVNGGELFDKIAQQGRLKEDEARRYFQQLINAVDYCHSRGVYHRDLKPENLILDANGVLKVSDFGLSAFSRQVREDGLLHTACGTPNYVAPEVLSDKGYDGAAADVWSCGVILFVLMAGYLPFDEPNLMTLYKRICKAEFSCPPWFSQGAKRVIKRILEPNPITRISIAELLEDEWFKKGYKPPSFDQDDEDITIDDVDAAFSNSKECLVTEKKEKPVSMNAFELISSSSEFSLENLFEKQAQLVKKETRFTSQRSASEIMSKMEETAKPLGFNVRKDNYKIKMKGDKSGRKGQLSVATEVFEVAPSLHVVELRKTGGDTLEFHKFYKNFSSGLKDVVWNTDAAAEEQKQ.

Residues 19-274 form the Protein kinase domain; the sequence is YEMGRTLGEG…IAELLEDEWF (256 aa). ATP contacts are provided by residues 25 to 33 and Lys-48; that span reads LGEGSFAKV. Asp-142 serves as the catalytic Proton acceptor. Residues 160–189 are activation loop; sequence DFGLSAFSRQVREDGLLHTACGTPNYVAPE. Position 164 is a phosphoserine (Ser-164). A Phosphothreonine modification is found at Thr-178. The NAF domain occupies 312-336; sequence EKPVSMNAFELISSSSEFSLENLFE. A PPI region spans residues 343-372; sequence KKETRFTSQRSASEIMSKMEETAKPLGFNV.

The protein belongs to the protein kinase superfamily. CAMK Ser/Thr protein kinase family. SNF1 subfamily. Interacts with CBL2 and CBL3. Mn(2+) is required as a cofactor. Expressed at low levels in roots and shoots. Detected in root vascular bundles and in the leaf vascular tissue and hydathode, but not in root tips.

Its subcellular location is the cytoplasm. It is found in the nucleus. The enzyme catalyses L-seryl-[protein] + ATP = O-phospho-L-seryl-[protein] + ADP + H(+). It catalyses the reaction L-threonyl-[protein] + ATP = O-phospho-L-threonyl-[protein] + ADP + H(+). In terms of biological role, CIPK serine-threonine protein kinases interact with CBL proteins. Binding of a CBL protein to the regulatory NAF domain of CIPK protein lead to the activation of the kinase in a calcium-dependent manner. Involved in K(+) homeostasis under low-K(+) stress. The protein is CBL-interacting serine/threonine-protein kinase 9 (CIPK9) of Arabidopsis thaliana (Mouse-ear cress).